A 324-amino-acid chain; its full sequence is Histidine N-acetyltransferase (324 aa).

The region spanning phenylalanine 15–proline 151 is the N-acetyltransferase domain.

The enzyme catalyses L-histidine + acetyl-CoA = N(alpha)-acetyl-L-histidine + CoA + H(+). Its function is as follows. Enzyme responsible for the N-acetyl-histidine (NAH) synthesis, which is a major constituent of brain and lens of ectothermic vertebrates. In Xenopus tropicalis (Western clawed frog), this protein is Histidine N-acetyltransferase (hisat).